Consider the following 252-residue polypeptide: 3-deoxy-manno-octulosonate cytidylyltransferase (252 aa).

It belongs to the KdsB family.

Its subcellular location is the cytoplasm. The catalysed reaction is 3-deoxy-alpha-D-manno-oct-2-ulosonate + CTP = CMP-3-deoxy-beta-D-manno-octulosonate + diphosphate. It functions in the pathway nucleotide-sugar biosynthesis; CMP-3-deoxy-D-manno-octulosonate biosynthesis; CMP-3-deoxy-D-manno-octulosonate from 3-deoxy-D-manno-octulosonate and CTP: step 1/1. The protein operates within bacterial outer membrane biogenesis; lipopolysaccharide biosynthesis. Activates KDO (a required 8-carbon sugar) for incorporation into bacterial lipopolysaccharide in Gram-negative bacteria. This chain is 3-deoxy-manno-octulosonate cytidylyltransferase, found in Nitratidesulfovibrio vulgaris (strain DP4) (Desulfovibrio vulgaris).